A 320-amino-acid polypeptide reads, in one-letter code: Malate dehydrogenase (320 aa).

Residues 10-15 (GSGMIG) and Asp34 contribute to the NAD(+) site. Substrate contacts are provided by Arg83 and Arg89. Residues Asn96 and 119–121 (ITN) contribute to the NAD(+) site. Residues Asn121 and Arg152 each coordinate substrate. The active-site Proton acceptor is His176.

Belongs to the LDH/MDH superfamily. MDH type 3 family.

It carries out the reaction (S)-malate + NAD(+) = oxaloacetate + NADH + H(+). Catalyzes the reversible oxidation of malate to oxaloacetate. The chain is Malate dehydrogenase from Bartonella quintana (strain Toulouse) (Rochalimaea quintana).